A 394-amino-acid polypeptide reads, in one-letter code: Suppressor APC domain-containing protein 2 (394 aa).

Disordered regions lie at residues 1-23, 95-125, and 150-188; these read MAGAAMAERGRVPPPAPAPSTEG, LLSADGGPRDPTRAPARPGDQPPPPPQRLVF, and GPSAAARSPEQLCAPAEAAPCPAEPERSQSAALEPSSSA. The segment covering 177–188 has biased composition (polar residues); the sequence is SQSAALEPSSSA. At Thr-219 the chain carries Phosphothreonine. A coiled-coil region spans residues 227 to 277; the sequence is GLLKQMKELEQEKEVLLQGLEMMARGRDWYQQQLQRVQERQRRLGQSRASA. A Phosphoserine modification is found at Ser-284. The stretch at 336 to 384 forms a coiled coil; it reads QQQTILMLKEQNRLLTQEVTEKSERITQLEQEKSALIKQLFEARALSQQ.

In terms of assembly, interacts with a spindle orientation complex at least composed of GNAI1, GPSM2 and NUMA1. Interacts with GPSM2 (via TPR motifs); this interaction is required to prevent GPSM2 anchoring at the mitotic apical cortex and is inhibited in presence of NUMA1 in a dose dependent manner. Interacts with PARD3. As to expression, expressed in 5-month-old fetal tissues, including stomach, intestine, colon, liver, brain, lung, heart, spleen and kidney. Undetectable in non-cancerous adult tissues. Expressed in many primary gastric carcinoma, but almost not in adjacent normal mucosa. Expressed preferentially in M and G1 phases, compared to S and G2 phases. Expression is up-regulated in hepatocellular carcinoma (HCC) and colorectal cancer (CRC) tissues (at protein level).

It localises to the cytoplasm. The protein localises to the nucleus. The protein resides in the cell cortex. Its subcellular location is the apical cell membrane. It is found in the cell junction. It localises to the tight junction. Functionally, plays a role in planar mitotic spindle orientation in retinal progenitor cells (RPCs) and promotes the production of symmetric terminal divisions. Negatively regulates the mitotic apical cortex localization of GPSM2. Involved also in positive regulation of cell proliferation and tumor cell growth. In Homo sapiens (Human), this protein is Suppressor APC domain-containing protein 2.